The following is a 580-amino-acid chain: V-type proton ATPase catalytic subunit A (580 aa).

209 to 216 is a binding site for ATP; the sequence is GAFGCGKT.

This sequence belongs to the ATPase alpha/beta chains family. V-ATPase is a heteromultimeric enzyme composed of a peripheral catalytic V1 complex (main components: subunits A, B, C, D, E, and F) attached to an integral membrane V0 proton pore complex (main component: the proteolipid protein).

The enzyme catalyses ATP + H2O + 4 H(+)(in) = ADP + phosphate + 5 H(+)(out). Its function is as follows. Catalytic subunit of the peripheral V1 complex of vacuolar ATPase. V-ATPase vacuolar ATPase is responsible for acidifying a variety of intracellular compartments in eukaryotic cells. The chain is V-type proton ATPase catalytic subunit A from Hordeum vulgare (Barley).